The sequence spans 426 residues: Serine--tRNA ligase (426 aa).

235–237 (TAE) contributes to the L-serine binding site. ATP is bound at residue 266 to 268 (RRE). Position 289 (E289) interacts with L-serine. 353–356 (EISS) provides a ligand contact to ATP. S389 is a binding site for L-serine.

Belongs to the class-II aminoacyl-tRNA synthetase family. Type-1 seryl-tRNA synthetase subfamily. Homodimer. The tRNA molecule binds across the dimer.

Its subcellular location is the cytoplasm. It catalyses the reaction tRNA(Ser) + L-serine + ATP = L-seryl-tRNA(Ser) + AMP + diphosphate + H(+). The enzyme catalyses tRNA(Sec) + L-serine + ATP = L-seryl-tRNA(Sec) + AMP + diphosphate + H(+). The protein operates within aminoacyl-tRNA biosynthesis; selenocysteinyl-tRNA(Sec) biosynthesis; L-seryl-tRNA(Sec) from L-serine and tRNA(Sec): step 1/1. Catalyzes the attachment of serine to tRNA(Ser). Is also able to aminoacylate tRNA(Sec) with serine, to form the misacylated tRNA L-seryl-tRNA(Sec), which will be further converted into selenocysteinyl-tRNA(Sec). This Trichormus variabilis (strain ATCC 29413 / PCC 7937) (Anabaena variabilis) protein is Serine--tRNA ligase.